Consider the following 230-residue polypeptide: MSEIKDIVVQGLWKNNSALVQLLGLCPLLAVTSTATNALGLGLATTLVLTLTNLTVSALRRWTPAEIRIPIYVMIIASVVSAVQMLINAYAFGLYQSLGIFIPLIVTNCIVVGRAEAFAAKKGPWLSALDGFSIGMGATGAMFVLGSLREILGNGTLFDGADSLLGSWAKVLRVEIFHTDSPFLLAMLPPGAFIGLGLMLAVKYLIDEKMKKRRAETAPSAVPAGETGKV.

6 consecutive transmembrane segments (helical) span residues 18–38, 39–59, 63–83, 86–106, 125–145, and 182–202; these read ALVQLLGLCPLLAVTSTATNA, LGLGLATTLVLTLTNLTVSAL, TPAEIRIPIYVMIIASVVSAV, LINAYAFGLYQSLGIFIPLIV, WLSALDGFSIGMGATGAMFVL, and PFLLAMLPPGAFIGLGLMLAV.

This sequence belongs to the NqrDE/RnfAE family. In terms of assembly, the complex is composed of six subunits: RsxA, RsxB, RsxC, RsxD, RsxE and RsxG.

The protein resides in the cell inner membrane. Part of a membrane-bound complex that couples electron transfer with translocation of ions across the membrane. Required to maintain the reduced state of SoxR. The polypeptide is Ion-translocating oxidoreductase complex subunit E (Salmonella newport (strain SL254)).